The chain runs to 309 residues: Serine/threonine-protein phosphatase 2A catalytic subunit alpha isoform (309 aa).

Mn(2+)-binding residues include Asp-57, His-59, Asp-85, and Asn-117. Residues Asp-57, His-59, and Asp-85 each coordinate Zn(2+). 2 residues coordinate Fe(3+): Asp-85 and Asn-117. His-118 functions as the Proton donor in the catalytic mechanism. Mn(2+)-binding residues include His-167 and His-241. His-167 and His-241 together coordinate Fe(3+). At Tyr-307 the chain carries Phosphotyrosine. Leu-309 bears the Leucine methyl ester mark.

It belongs to the PPP phosphatase family. PP-1 subfamily. In terms of assembly, PP2A consists of a common heterodimeric core enzyme composed of PPP2CA, a 36 kDa catalytic subunit (subunit C), and PPP2R1A, a 65 kDa constant regulatory subunit (PR65 or subunit A), that associates with a variety of regulatory subunits. Proteins that associate with the core dimer include three families of regulatory subunits B (the R2/B/PR55/B55, R3/B''/PR72/PR130/PR59 and R5/B'/B56 families), the 48 kDa variable regulatory subunit, viral proteins, and cell signaling molecules. Interacts with the PP2A A subunit PPP2R1A. Interacts with the regulatory subunit PPP2R2A. Interacts (via C-terminus) with PTPA. Interacts with NXN; the interaction is direct. Interacts with KCTD20. Interacts with BTBD10. Interacts with SGO1 and SGO2. Interacts with RAF1. Interaction with IGBP1 protects unassembled PPP2CA from degradative ubiquitination. Interacts with GSK3B (via C2 domain). Interacts with MFHAS1; retains PPP2CA into the cytoplasm and excludes it from the nucleus. Interacts with PABIR1/FAM122A. Interacts with ADCY8; interaction is phosphatase activity-dependent; antagonizes interaction between ADCY8 and calmodulin. Interacts with CRTC3 (when phosphorylated at 'Ser-391'). Interacts with SPRY2; the interaction is inhibited by TESK1 interaction with SPRY2, possibly by vesicular sequestration of SPRY2. Interacts with TRAF3IP3. Interacts with AMBRA1 (via PxP motifs); enhancing interaction between PPP2CA and MYC or FOXO3. Forms a complex with AMBRA1 and BECN1; AMBRA1 and BECN1 components of the complex regulate MYC stability via different pathways. Part of the core of STRIPAK complexes composed of PP2A catalytic and scaffolding subunits, the striatins (PP2A regulatory subunits), the striatin-associated proteins MOB4, STRIP1 and STRIP2, PDCD10 and members of the STE20 kinases, such as STK24 and STK26. Phosphatase component of the Integrator-PP2A (INTAC) complex, composed of the Integrator core complex and protein phosphatase 2A subunits PPP2CA and PPP2R1A. Mn(2+) serves as cofactor. The cofactor is Fe(3+). It depends on Zn(2+) as a cofactor. Reversibly methyl esterified on Leu-309 by leucine carboxyl methyltransferase 1 (Lcmt1) and protein phosphatase methylesterase 1 (Ppme1). Carboxyl methylation influences the affinity of the catalytic subunit for the different regulatory subunits, thereby modulating the PP2A holoenzyme's substrate specificity, enzyme activity and cellular localization. In terms of processing, phosphorylation of either threonine (by autophosphorylation-activated protein kinase) or tyrosine results in inactivation of the phosphatase. Auto-dephosphorylation has been suggested as a mechanism for reactivation. Post-translationally, polyubiquitinated, leading to its degradation by the proteasome.

Its subcellular location is the cytoplasm. The protein resides in the nucleus. It is found in the chromosome. It localises to the centromere. The protein localises to the cytoskeleton. Its subcellular location is the spindle pole. It catalyses the reaction O-phospho-L-seryl-[protein] + H2O = L-seryl-[protein] + phosphate. The enzyme catalyses O-phospho-L-threonyl-[protein] + H2O = L-threonyl-[protein] + phosphate. With respect to regulation, inhibited by the interaction between PPP2R2A and ARPP19; this inhibition is enhanced when ARPP19 is phosphorylated. Inhibited by the interaction between PPP2R2A and PABIR1/FAM122A. Its function is as follows. Catalytic subunit of protein phosphatase 2A (PP2A), a serine/threonine phosphatase involved in the regulation of a wide variety of enzymes, signal transduction pathways, and cellular events. PP2A is the major phosphatase for microtubule-associated proteins (MAPs). PP2A can modulate the activity of phosphorylase B kinase casein kinase 2, mitogen-stimulated S6 kinase, and MAP-2 kinase. Cooperates with SGO2 to protect centromeric cohesin from separase-mediated cleavage in oocytes specifically during meiosis I. Can dephosphorylate various proteins, such as AXIN1, p53/TP53, PIM3, WEE1. Activates RAF1 by dephosphorylating it at 'Ser-259'. Mediates dephosphorylation of WEE1, preventing its ubiquitin-mediated proteolysis, increasing WEE1 protein levels, and promoting the G2/M checkpoint. Mediates dephosphorylation of MYC; promoting its ubiquitin-mediated proteolysis: interaction with AMBRA1 enhances interaction between PPP2CA and MYC. Mediates dephosphorylation of FOXO3; promoting its stabilization: interaction with AMBRA1 enhances interaction between PPP2CA and FOXO3. Catalyzes dephosphorylation of the pyrin domain of NLRP3, promoting assembly of the NLRP3 inflammasome. Together with RACK1 adapter, mediates dephosphorylation of AKT1 at 'Ser-473', preventing AKT1 activation and AKT-mTOR signaling pathway. Dephosphorylation of AKT1 is essential for regulatory T-cells (Treg) homeostasis and stability. Catalyzes dephosphorylation of PIM3, promotinh PIM3 ubiquitination and proteasomal degradation. Part of the striatin-interacting phosphatase and kinase (STRIPAK) complexes. STRIPAK complexes have critical roles in protein (de)phosphorylation and are regulators of multiple signaling pathways including Hippo, MAPK, nuclear receptor and cytoskeleton remodeling. Different types of STRIPAK complexes are involved in a variety of biological processes such as cell growth, differentiation, apoptosis, metabolism and immune regulation. Key mediator of a quality checkpoint during transcription elongation as part of the Integrator-PP2A (INTAC) complex. The INTAC complex drives premature transcription termination of transcripts that are unfavorably configured for transcriptional elongation: within the INTAC complex, PPP2CA catalyzes dephosphorylation of the C-terminal domain (CTD) of Pol II subunit POLR2A/RPB1 and SUPT5H/SPT5, thereby preventing transcriptional elongation. The protein is Serine/threonine-protein phosphatase 2A catalytic subunit alpha isoform (Ppp2ca) of Rattus norvegicus (Rat).